The primary structure comprises 297 residues: Protoheme IX farnesyltransferase (297 aa).

The next 9 helical transmembrane spans lie at 23–43, 49–69, 93–113, 117–137, 144–164, 171–191, 215–235, 238–258, and 275–295; these read VTQL…PGMP, VFGT…NCLI, IQVL…LYHL, LTMW…TVIL, NIVI…AAVA, AWVL…ALAL, RLHI…PYAI, SGAL…WYAW, and FSIL…WVGL.

This sequence belongs to the UbiA prenyltransferase family. Protoheme IX farnesyltransferase subfamily.

Its subcellular location is the cell inner membrane. It catalyses the reaction heme b + (2E,6E)-farnesyl diphosphate + H2O = Fe(II)-heme o + diphosphate. It participates in porphyrin-containing compound metabolism; heme O biosynthesis; heme O from protoheme: step 1/1. In terms of biological role, converts heme B (protoheme IX) to heme O by substitution of the vinyl group on carbon 2 of heme B porphyrin ring with a hydroxyethyl farnesyl side group. This is Protoheme IX farnesyltransferase from Bordetella bronchiseptica (strain ATCC BAA-588 / NCTC 13252 / RB50) (Alcaligenes bronchisepticus).